A 1141-amino-acid chain; its full sequence is DNA polymerase 120R (1141 aa).

It belongs to the DNA polymerase type-B family.

It carries out the reaction DNA(n) + a 2'-deoxyribonucleoside 5'-triphosphate = DNA(n+1) + diphosphate. In terms of biological role, DNA-directed DNA polymerase involved in viral DNA replication. In Invertebrate iridescent virus 3 (IIV-3), this protein is DNA polymerase 120R.